A 146-amino-acid polypeptide reads, in one-letter code: Hemoglobin subunit beta (146 aa).

In terms of domain architecture, Globin spans 2–146; the sequence is HWTETERATI…VVAALSREYH (145 aa). Heme b contacts are provided by H63 and H92.

This sequence belongs to the globin family. In terms of assembly, heterotetramer of two alpha chains and two beta chains (an easy dimerization is also reported). In terms of tissue distribution, red blood cells.

In terms of biological role, involved in oxygen transport from the lung to the various peripheral tissues. This is Hemoglobin subunit beta (HBB) from Latimeria chalumnae (Coelacanth).